Reading from the N-terminus, the 177-residue chain is Large ribosomal subunit protein uL6 (177 aa).

This sequence belongs to the universal ribosomal protein uL6 family. In terms of assembly, part of the 50S ribosomal subunit.

Its function is as follows. This protein binds to the 23S rRNA, and is important in its secondary structure. It is located near the subunit interface in the base of the L7/L12 stalk, and near the tRNA binding site of the peptidyltransferase center. This chain is Large ribosomal subunit protein uL6, found in Histophilus somni (strain 129Pt) (Haemophilus somnus).